We begin with the raw amino-acid sequence, 484 residues long: Glutamyl-tRNA(Gln) amidotransferase subunit A (484 aa).

Catalysis depends on charge relay system residues Lys76 and Ser151. Ser175 (acyl-ester intermediate) is an active-site residue.

Belongs to the amidase family. GatA subfamily. In terms of assembly, heterotrimer of A, B and C subunits.

It carries out the reaction L-glutamyl-tRNA(Gln) + L-glutamine + ATP + H2O = L-glutaminyl-tRNA(Gln) + L-glutamate + ADP + phosphate + H(+). Functionally, allows the formation of correctly charged Gln-tRNA(Gln) through the transamidation of misacylated Glu-tRNA(Gln) in organisms which lack glutaminyl-tRNA synthetase. The reaction takes place in the presence of glutamine and ATP through an activated gamma-phospho-Glu-tRNA(Gln). The protein is Glutamyl-tRNA(Gln) amidotransferase subunit A of Thioalkalivibrio sulfidiphilus (strain HL-EbGR7).